A 236-amino-acid chain; its full sequence is Endonuclease V (236 aa).

Mg(2+)-binding residues include Asp-47 and Asp-115.

Belongs to the endonuclease V family. It depends on Mg(2+) as a cofactor.

The protein resides in the cytoplasm. It catalyses the reaction Endonucleolytic cleavage at apurinic or apyrimidinic sites to products with a 5'-phosphate.. In terms of biological role, DNA repair enzyme involved in the repair of deaminated bases. Selectively cleaves double-stranded DNA at the second phosphodiester bond 3' to a deoxyinosine leaving behind the intact lesion on the nicked DNA. This Xanthomonas campestris pv. campestris (strain 8004) protein is Endonuclease V.